The following is a 290-amino-acid chain: Zinc finger protein-like 1 homolog (290 aa).

The B box-type; degenerate zinc-finger motif lies at Met1–Trp43. Residues Cys53–Ser101 form an RING-type; atypical zinc finger. A compositionally biased stretch (polar residues) spans Asn156–Arg168. The tract at residues Asn156 to Ser175 is disordered. A helical transmembrane segment spans residues Trp249 to Leu269.

The protein belongs to the ZFPL1 family.

It is found in the membrane. This is Zinc finger protein-like 1 homolog from Aedes aegypti (Yellowfever mosquito).